Consider the following 483-residue polypeptide: NADPH:adrenodoxin oxidoreductase, mitochondrial (483 aa).

The transit peptide at 1–14 (MSRYLARYMVSRYF) directs the protein to the mitochondrion. Alanine 32, aspartate 53, leucine 61, and leucine 97 together coordinate FAD. NADP(+) contacts are provided by residues 169–172 (QGNV), 213–214 (RR), and glutamate 225. Residues tryptophan 391 and 398–400 (GII) contribute to the FAD site. Glycine 398 is a binding site for NADP(+).

Belongs to the ferredoxin--NADP reductase type 1 family. The cofactor is FAD.

Its subcellular location is the mitochondrion. It catalyses the reaction 2 reduced [adrenodoxin] + NADP(+) + H(+) = 2 oxidized [adrenodoxin] + NADPH. Functionally, associates in vitro with the adrenodoxin-like protein MFDX1 to form an efficient low potential electron transfer chain that is able to reduce cytochrome C. Functions as accessory mitochondrial protein involved with BIO2 in the plant biotin synthase reaction. The protein is NADPH:adrenodoxin oxidoreductase, mitochondrial of Arabidopsis thaliana (Mouse-ear cress).